A 412-amino-acid polypeptide reads, in one-letter code: Adenosine receptor A2a (412 aa).

Topologically, residues 1 to 7 (MSTMGSW) are extracellular. The helical transmembrane segment at 8 to 32 (VYITVELAIAVLAILGNVLVCWAVW) threads the bilayer. The Cytoplasmic portion of the chain corresponds to 33 to 42 (LNSNLQNVTN). A helical membrane pass occupies residues 43–66 (YFVVSLAAADIAVGVLAIPFAITI). Residues 67-77 (STGFCAACHNC) are Extracellular-facing. 3 cysteine pairs are disulfide-bonded: Cys-71–Cys-159, Cys-74–Cys-146, and Cys-77–Cys-166. Residues 78–100 (LFFACFVLVLTQSSIFSLLAIAI) traverse the membrane as a helical segment. Residues 101-120 (DRYIAIRIPLRYNGLVTGTR) are Cytoplasmic-facing. Residues 121-143 (AKGIIAVCWVLSFAIGLTPMLGW) traverse the membrane as a helical segment. At 144-173 (NNCSQPKEGRNYSQGCGEGQVACLFEDVVP) the chain is on the extracellular side. N-linked (GlcNAc...) asparagine glycans are attached at residues Asn-145 and Asn-154. Glu-169 provides a ligand contact to adenosine. Residues 174–198 (MNYMVYYNFFAFVLVPLLLMLGVYL) form a helical membrane-spanning segment. Topologically, residues 199-234 (RIFLAARRQLKQMESQPLPGERARSTLQKEVHAAKS) are cytoplasmic. The chain crosses the membrane as a helical span at residues 235-258 (LAIIVGLFALCWLPLHIINCFTFF). Asn-253 lines the adenosine pocket. Cys-259 and Cys-262 are disulfide-bonded. At 259 to 266 (CPECSHAP) the chain is on the extracellular side. A helical transmembrane segment spans residues 267-290 (LWLMYLTIVLSHTNSVVNPFIYAY). 2 residues coordinate adenosine: Ser-277 and His-278. At 291 to 412 (RIREFRQTFR…PLAQDGAGVS (122 aa)) the chain is on the cytoplasmic side. A disordered region spans residues 392–412 (GACPESPGLEGPLAQDGAGVS).

The protein belongs to the G-protein coupled receptor 1 family. As to quaternary structure, interacts (via cytoplasmic C-terminal domain) with USP4; the interaction is direct. May interact with DRD4. Interacts with NECAB2. Interacts (via cytoplasmic C-terminal domain) with GAS2L2; interaction enhances receptor-mediated adenylyl cyclase activity. Ubiquitinated. Deubiquitinated by USP4; leading to stabilization and expression at the cell surface.

The protein resides in the cell membrane. Its function is as follows. Receptor for adenosine. The activity of this receptor is mediated by G proteins which activate adenylyl cyclase. This Canis lupus familiaris (Dog) protein is Adenosine receptor A2a (ADORA2A).